The chain runs to 277 residues: Small ribosomal subunit protein uS3 (277 aa).

The region spanning I38–K106 is the KH type-2 domain. The tract at residues A217–S277 is disordered. A compositionally biased stretch (basic and acidic residues) spans A225–A235. Residues S242–T261 are compositionally biased toward low complexity.

Belongs to the universal ribosomal protein uS3 family. As to quaternary structure, part of the 30S ribosomal subunit. Forms a tight complex with proteins S10 and S14.

In terms of biological role, binds the lower part of the 30S subunit head. Binds mRNA in the 70S ribosome, positioning it for translation. The protein is Small ribosomal subunit protein uS3 of Mycobacteroides abscessus (strain ATCC 19977 / DSM 44196 / CCUG 20993 / CIP 104536 / JCM 13569 / NCTC 13031 / TMC 1543 / L948) (Mycobacterium abscessus).